The sequence spans 161 residues: RNA pyrophosphohydrolase (161 aa).

One can recognise a Nudix hydrolase domain in the interval 12–154 (PYRPGVGMMI…KRKLYQAVVK (143 aa)). The short motif at 46–67 (GGIVPGETPSIAAMREMLEEIG) is the Nudix box element.

Belongs to the Nudix hydrolase family. RppH subfamily. A divalent metal cation is required as a cofactor.

Accelerates the degradation of transcripts by removing pyrophosphate from the 5'-end of triphosphorylated RNA, leading to a more labile monophosphorylated state that can stimulate subsequent ribonuclease cleavage. The sequence is that of RNA pyrophosphohydrolase from Rickettsia bellii (strain OSU 85-389).